Consider the following 205-residue polypeptide: Small ribosomal subunit protein uS4 (205 aa).

Residues N18–L45 form a disordered region. Positions R94–S157 constitute an S4 RNA-binding domain.

Belongs to the universal ribosomal protein uS4 family. Part of the 30S ribosomal subunit. Contacts protein S5. The interaction surface between S4 and S5 is involved in control of translational fidelity.

Its function is as follows. One of the primary rRNA binding proteins, it binds directly to 16S rRNA where it nucleates assembly of the body of the 30S subunit. Functionally, with S5 and S12 plays an important role in translational accuracy. This Rhodopseudomonas palustris (strain BisA53) protein is Small ribosomal subunit protein uS4.